Reading from the N-terminus, the 528-residue chain is UDP-glucuronosyltransferase 2A1 (528 aa).

A signal peptide spans 1–21 (MLKNILLCSLQISLLGMSLGG). The Extracellular portion of the chain corresponds to 22 to 494 (NVLIWPMEGS…FQYHSLDVIG (473 aa)). N49 carries an N-linked (GlcNAc...) asparagine glycan. K135 carries the N6-succinyllysine modification. A glycan (N-linked (GlcNAc...) asparagine) is linked at N314. Residues 495-515 (FLLACVASAILLVAKCCLFIF) form a helical membrane-spanning segment. Topologically, residues 516 to 528 (QKVGKTGKKKKRD) are cytoplasmic.

This sequence belongs to the UDP-glycosyltransferase family.

It is found in the membrane. It catalyses the reaction glucuronate acceptor + UDP-alpha-D-glucuronate = acceptor beta-D-glucuronoside + UDP + H(+). The enzyme catalyses 16beta,17beta-estriol + UDP-alpha-D-glucuronate = 16beta,17beta-estriol 16-O-(beta-D-glucuronate) + UDP + H(+). The catalysed reaction is 16alpha,17alpha-estriol + UDP-alpha-D-glucuronate = 16alpha,17alpha-estriol 16-O-(beta-D-glucuronate) + UDP + H(+). It carries out the reaction 17alpha-estradiol + UDP-alpha-D-glucuronate = 17alpha-estradiol 17-O-(beta-D-glucuronate) + UDP + H(+). It catalyses the reaction 17alpha-estradiol + UDP-alpha-D-glucuronate = 17alpha-estradiol 3-O-(beta-D-glucuronate) + UDP + H(+). The enzyme catalyses 17beta-estradiol + UDP-alpha-D-glucuronate = 17beta-estradiol 3-O-(beta-D-glucuronate) + UDP + H(+). The catalysed reaction is 17beta-estradiol + UDP-alpha-D-glucuronate = 17beta-estradiol 17-O-(beta-D-glucuronate) + UDP + H(+). It carries out the reaction testosterone + UDP-alpha-D-glucuronate = testosterone 17-O-(beta-D-glucuronate) + UDP + H(+). It catalyses the reaction epitestosterone + UDP-alpha-D-glucuronate = epitestosterone 17-O-(beta-D-glucuronate) + UDP + H(+). The enzyme catalyses lithocholate + UDP-alpha-D-glucuronate = lithocholoyl-3-O-(beta-D-glucuronate) + UDP + H(+). The catalysed reaction is lithocholate + UDP-alpha-D-glucuronate = lithocholoyl-24-O-(beta-D-glucuronate) + UDP. It carries out the reaction deoxycholate + UDP-alpha-D-glucuronate = deoxycholoyl-24-O-(beta-D-glucuronate) + UDP. It catalyses the reaction hyodeoxycholate + UDP-alpha-D-glucuronate = hyodeoxycholate 6-O-(beta-D-glucuronate) + UDP + H(+). The enzyme catalyses hyocholate + UDP-alpha-D-glucuronate = hyocholoyl-24-O-(beta-D-glucuronate) + UDP. UDP-glucuronosyltransferase (UGT) that catalyzes phase II biotransformation reactions in which lipophilic substrates are conjugated with glucuronic acid to increase the metabolite's water solubility, thereby facilitating excretion into either the urine or bile. Essential for the elimination and detoxification of drugs, xenobiotics and endogenous compounds. Catalyzes the glucuronidation of endogenous steroid hormones such as androgens (testosterones) and estrogens (estradiol and estriol). Contributes to bile acid (BA) detoxification by catalyzing the glucuronidation of BA substrates, which are natural detergents for dietary lipids absorption. Shows a high affinity to aliphatic odorants such as citronellol as well as olfactory tissue specificity, and therefore may be involved in olfaction. The protein is UDP-glucuronosyltransferase 2A1 of Mus musculus (Mouse).